Reading from the N-terminus, the 192-residue chain is MDDVTPDELEAVSVLLRLPNPVFFDQEEEEEDEEEEYDEESVCEDDLEVKSCMQTNENKGKKRKVAEQLMDSDVKDNQYRLMLGKEPVKKMMDALGKTEKLGTKGLNVSVYGPNGENHKMVLKIWIKGTPVLTSGWKNFVKSYKLEKHVDFLTIWMFRHKKTREICFAIDSTRFPVKGTLSKRILQEVFKNP.

Residues 22-44 form a disordered region; sequence VFFDQEEEEEDEEEEYDEESVCE. Over residues 25–44 the composition is skewed to acidic residues; the sequence is DQEEEEEDEEEEYDEESVCE. The segment at residues 75–173 is a DNA-binding region (TF-B3); the sequence is KDNQYRLMLG…EICFAIDSTR (99 aa).

The protein resides in the nucleus. The protein is Putative B3 domain-containing protein At4g03160 of Arabidopsis thaliana (Mouse-ear cress).